The sequence spans 210 residues: Probable nicotinate-nucleotide adenylyltransferase (210 aa).

Belongs to the NadD family.

It carries out the reaction nicotinate beta-D-ribonucleotide + ATP + H(+) = deamido-NAD(+) + diphosphate. Its pathway is cofactor biosynthesis; NAD(+) biosynthesis; deamido-NAD(+) from nicotinate D-ribonucleotide: step 1/1. Its function is as follows. Catalyzes the reversible adenylation of nicotinate mononucleotide (NaMN) to nicotinic acid adenine dinucleotide (NaAD). In Streptococcus pyogenes serotype M6 (strain ATCC BAA-946 / MGAS10394), this protein is Probable nicotinate-nucleotide adenylyltransferase.